A 76-amino-acid chain; its full sequence is DNA-directed RNA polymerase subunit omega (76 aa).

Belongs to the RNA polymerase subunit omega family. In terms of assembly, in cyanobacteria the RNAP catalytic core is composed of 2 alpha, 1 beta, 1 beta', 1 gamma and 1 omega subunit. When a sigma factor is associated with the core the holoenzyme is formed, which can initiate transcription.

The catalysed reaction is RNA(n) + a ribonucleoside 5'-triphosphate = RNA(n+1) + diphosphate. Its function is as follows. Promotes RNA polymerase assembly. Latches the N- and C-terminal regions of the beta' subunit thereby facilitating its interaction with the beta and alpha subunits. The protein is DNA-directed RNA polymerase subunit omega of Synechococcus elongatus (strain ATCC 33912 / PCC 7942 / FACHB-805) (Anacystis nidulans R2).